Here is a 171-residue protein sequence, read N- to C-terminus: Translationally-controlled tumor protein homolog (171 aa).

Positions 1–171 (MKIWKDVFTG…FKHGLEEEKF (171 aa)) constitute a TCTP domain.

This sequence belongs to the TCTP family.

The protein localises to the cytoplasm. Its function is as follows. Involved in calcium binding and microtubule stabilization. The sequence is that of Translationally-controlled tumor protein homolog from Anopheles gambiae (African malaria mosquito).